Reading from the N-terminus, the 90-residue chain is Phosphoribosyl-ATP pyrophosphatase (90 aa).

Belongs to the PRA-PH family.

It is found in the cytoplasm. The catalysed reaction is 1-(5-phospho-beta-D-ribosyl)-ATP + H2O = 1-(5-phospho-beta-D-ribosyl)-5'-AMP + diphosphate + H(+). The protein operates within amino-acid biosynthesis; L-histidine biosynthesis; L-histidine from 5-phospho-alpha-D-ribose 1-diphosphate: step 2/9. The sequence is that of Phosphoribosyl-ATP pyrophosphatase from Streptomyces avermitilis (strain ATCC 31267 / DSM 46492 / JCM 5070 / NBRC 14893 / NCIMB 12804 / NRRL 8165 / MA-4680).